Reading from the N-terminus, the 306-residue chain is Porphobilinogen deaminase (306 aa).

Cys-239 carries the S-(dipyrrolylmethanemethyl)cysteine modification.

The protein belongs to the HMBS family. Monomer. Dipyrromethane is required as a cofactor.

It carries out the reaction 4 porphobilinogen + H2O = hydroxymethylbilane + 4 NH4(+). Its pathway is porphyrin-containing compound metabolism; protoporphyrin-IX biosynthesis; coproporphyrinogen-III from 5-aminolevulinate: step 2/4. Functionally, tetrapolymerization of the monopyrrole PBG into the hydroxymethylbilane pre-uroporphyrinogen in several discrete steps. The polypeptide is Porphobilinogen deaminase (Helicobacter pylori (strain HPAG1)).